The sequence spans 345 residues: Myb/SANT-like DNA-binding domain-containing protein 4 (345 aa).

The Myb-like domain occupies 4–77 (LKRKRKSNFS…EVKRRYLDWR (74 aa)). Lysine 9 is covalently cross-linked (Glycyl lysine isopeptide (Lys-Gly) (interchain with G-Cter in SUMO2)). Serine 106 carries the phosphoserine modification. Glycyl lysine isopeptide (Lys-Gly) (interchain with G-Cter in SUMO2) cross-links involve residues lysine 114 and lysine 142. The segment at 139–175 (TEVKVEEEERDPQSPEFEIEEEEEMLSSVIPDSRREN) is disordered. Threonine 188 bears the Phosphothreonine mark. Residues 202-344 (HLLMNIEKQK…RLRIQKEGHL (143 aa)) are a coiled coil. Residues lysine 237, lysine 254, and lysine 273 each participate in a glycyl lysine isopeptide (Lys-Gly) (interchain with G-Cter in SUMO2) cross-link.

This Mus musculus (Mouse) protein is Myb/SANT-like DNA-binding domain-containing protein 4 (Msantd4).